The chain runs to 843 residues: Protein translocase subunit SecA (843 aa).

Residues Gln-91, Gly-109–Thr-113, and Asp-498 each bind ATP. Basic and acidic residues predominate over residues Asp-796 to Arg-825. The tract at residues Asp-796–Ser-833 is disordered. The Zn(2+) site is built by Cys-829, Cys-831, Cys-840, and His-841.

Belongs to the SecA family. In terms of assembly, monomer and homodimer. Part of the essential Sec protein translocation apparatus which comprises SecA, SecYEG and auxiliary proteins SecDF. Other proteins may also be involved. Requires Zn(2+) as cofactor.

The protein localises to the cell membrane. Its subcellular location is the cytoplasm. The catalysed reaction is ATP + H2O + cellular proteinSide 1 = ADP + phosphate + cellular proteinSide 2.. Functionally, part of the Sec protein translocase complex. Interacts with the SecYEG preprotein conducting channel. Has a central role in coupling the hydrolysis of ATP to the transfer of proteins into and across the cell membrane, serving as an ATP-driven molecular motor driving the stepwise translocation of polypeptide chains across the membrane. This Staphylococcus saprophyticus subsp. saprophyticus (strain ATCC 15305 / DSM 20229 / NCIMB 8711 / NCTC 7292 / S-41) protein is Protein translocase subunit SecA.